The primary structure comprises 65 residues: Defensin-B2 (65 aa).

A signal peptide spans 1 to 23 (MEARVLLLCAVLFLLVHTPPAAG). Intrachain disulfides connect C29-C56, C36-C50, and C40-C57.

Belongs to the beta-defensin family. As to expression, lowly expressed in spleen, and lung.

It localises to the secreted. Its function is as follows. Has antimicrobial activity. The polypeptide is Defensin-B2 (Ornithorhynchus anatinus (Duckbill platypus)).